We begin with the raw amino-acid sequence, 86 residues long: Protein Vpu (86 aa).

Topologically, residues 1-8 (MDIVQQVG) are extracellular. Residues 9-29 (LLVVLIIELVIVIVIWVKVYK) traverse the membrane as a helical segment. Residues 30–86 (LCKEDRRQKKIDRLIARIRERAEDSGNESDGDTEELQDLITEGDNLMHIGIRDNRNN) are Cytoplasmic-facing. Phosphoserine; by host CK2 occurs at positions 54 and 58.

It belongs to the HIV-1 VPU protein family. Homopentamer. Interacts with host CD4 and BRTC; these interactions induce proteasomal degradation of CD4. Interacts with host BST2; this interaction leads to the degradation of host BST2. Interacts with host FBXW11. Interacts with host AP1M1; this interaction plays a role in the mistrafficking and subsequent degradation of host BST2. Interacts with host RANBP2; this interaction allows Vpu to down-regulate host BLM sumoylation. Forms pentamers or hexamers. Interacts with host CD4 and BRTC; these interactions induce proteasomal degradation of CD4. Interacts with host BST2; this interaction leads to the degradation of host BST2. Interacts with host FBXW11. Interacts with host AP1M1; this interaction plays a role in the mistrafficking and subsequent degradation of host BST2. Post-translationally, phosphorylated by host CK2. This phosphorylation is necessary for interaction with human BTRC and degradation of CD4.

It is found in the host membrane. With respect to regulation, ion channel activity is inhibited by hexamethylene amiloride in vitro. Enhances virion budding by targeting host CD4 and Tetherin/BST2 to proteasome degradation. Degradation of CD4 prevents any unwanted premature interactions between viral Env and its host receptor CD4 in the endoplasmic reticulum. Degradation of antiretroviral protein Tetherin/BST2 is important for virion budding, as BST2 tethers new viral particles to the host cell membrane. Mechanistically, Vpu bridges either CD4 or BST2 to BTRC, a substrate recognition subunit of the Skp1/Cullin/F-box protein E3 ubiquitin ligase, induces their ubiquitination and subsequent proteasomal degradation. The alteration of the E3 ligase specificity by Vpu seems to promote the degradation of host IKBKB, leading to NF-kappa-B down-regulation and subsequent apoptosis. Acts as a viroporin that forms an oligomeric ion channel in membranes. Modulates the host DNA repair mechanisms to promote degradation of nuclear viral cDNA in cells that are already productively infected in order to suppress immune sensing and proviral hyper-integration (superinfection). Manipulates PML-NBs and modulates SUMOylation of host BLM protein thereby enhancing its DNA-end processing activity toward viral unintegrated linear DNA. Also inhibits RAD52-mediated homologous repair of viral cDNA, preventing the generation of dead-end circular forms of single copies of the long terminal repeat and permitting sustained nucleolytic attack. The chain is Protein Vpu from Pan troglodytes (Chimpanzee).